A 226-amino-acid polypeptide reads, in one-letter code: Insulin-like growth factor-binding protein 6 (226 aa).

Residues 1–25 (MTWDGLPTQPLLMLLMLLFAAGSES) form the signal peptide. The IGFBP N-terminal domain occupies 26–99 (ALAGCPGCGP…LIGQGRCQRA (74 aa)). Cystine bridges form between Cys-30–Cys-33, Cys-49–Cys-55, Cys-63–Cys-76, and Cys-70–Cys-96. A disordered region spans residues 92–148 (GQGRCQRARGPSEETTKESKPHGGASRPRDRDRQKNPRTSAAPIRPSPVQDGEMGPC). Residues 101-126 (GPSEETTKESKPHGGASRPRDRDRQK) show a composition bias toward basic and acidic residues. A Thyroglobulin type-1 domain is found at 145–220 (MGPCRRHLDS…SPDGQGSSQC (76 aa)). Intrachain disulfides connect Cys-148/Cys-176, Cys-187/Cys-198, and Cys-200/Cys-220. The tract at residues 205-226 (GQPLPVSPDGQGSSQCSARSSG) is disordered. Over residues 214–226 (GQGSSQCSARSSG) the composition is skewed to polar residues.

As to quaternary structure, interacts (via C-terminal domain) with PHB2. In terms of processing, O-glycosylated.

Its subcellular location is the secreted. Its function is as follows. IGF-binding proteins prolong the half-life of the IGFs and have been shown to either inhibit or stimulate the growth promoting effects of the IGFs on cell culture. They alter the interaction of IGFs with their cell surface receptors. Activates the MAPK signaling pathway and induces cell migration. The protein is Insulin-like growth factor-binding protein 6 (Igfbp6) of Rattus norvegicus (Rat).